Reading from the N-terminus, the 278-residue chain is 4-deoxy-L-threo-5-hexosulose-uronate ketol-isomerase (278 aa).

Zn(2+) contacts are provided by H196, H198, E203, and H245.

It belongs to the KduI family. Zn(2+) is required as a cofactor.

The catalysed reaction is 5-dehydro-4-deoxy-D-glucuronate = 3-deoxy-D-glycero-2,5-hexodiulosonate. The protein operates within glycan metabolism; pectin degradation; 2-dehydro-3-deoxy-D-gluconate from pectin: step 4/5. Its function is as follows. Catalyzes the isomerization of 5-dehydro-4-deoxy-D-glucuronate to 3-deoxy-D-glycero-2,5-hexodiulosonate. This is 4-deoxy-L-threo-5-hexosulose-uronate ketol-isomerase from Burkholderia cenocepacia (strain ATCC BAA-245 / DSM 16553 / LMG 16656 / NCTC 13227 / J2315 / CF5610) (Burkholderia cepacia (strain J2315)).